Reading from the N-terminus, the 347-residue chain is D-alanine--D-alanine ligase (347 aa).

The ATP-grasp domain occupies 131–333; the sequence is KRVLESAGIA…YPKLIERLVD (203 aa). 161–216 contributes to the ATP binding site; sequence EEKLAYPVFTKPSNMGSSVGISKSENQEELRQALKLAFRYDSRVLVEQGVNAREIE. Asp287, Glu300, and Asn302 together coordinate Mg(2+).

It belongs to the D-alanine--D-alanine ligase family. Mg(2+) is required as a cofactor. Requires Mn(2+) as cofactor.

It localises to the cytoplasm. It carries out the reaction 2 D-alanine + ATP = D-alanyl-D-alanine + ADP + phosphate + H(+). It functions in the pathway cell wall biogenesis; peptidoglycan biosynthesis. Its function is as follows. Cell wall formation. The protein is D-alanine--D-alanine ligase of Streptococcus pneumoniae serotype 4 (strain ATCC BAA-334 / TIGR4).